The chain runs to 314 residues: tRNA dimethylallyltransferase 1 (314 aa).

An ATP-binding site is contributed by 8–15 (GPTGTGKS). Residue 10 to 15 (TGTGKS) participates in substrate binding.

It belongs to the IPP transferase family. Monomer. Mg(2+) serves as cofactor.

The enzyme catalyses adenosine(37) in tRNA + dimethylallyl diphosphate = N(6)-dimethylallyladenosine(37) in tRNA + diphosphate. Functionally, catalyzes the transfer of a dimethylallyl group onto the adenine at position 37 in tRNAs that read codons beginning with uridine, leading to the formation of N6-(dimethylallyl)adenosine (i(6)A). In Mycobacterium marinum (strain ATCC BAA-535 / M), this protein is tRNA dimethylallyltransferase 1.